An 842-amino-acid chain; its full sequence is Amyloid-beta A4 precursor protein-binding family A member 1 (842 aa).

3 disordered regions span residues 1-121 (MNHL…DESA), 238-349 (RLHH…EKRD), and 366-439 (KTRT…KESR). The residue at position 82 (Ser-82) is a Phosphoserine. Composition is skewed to basic and acidic residues over residues 106–115 (DGYEAERAQD) and 240–258 (HHYDERSDGESDSPEKEAE). Residues Ser-246, Ser-250, Ser-252, Ser-267, Ser-284, and Ser-289 each carry the phosphoserine modification. Thr-309 bears the Phosphothreonine mark. A phosphoserine mark is found at Ser-317 and Ser-372. Residue Thr-375 is modified to Phosphothreonine. Basic and acidic residues predominate over residues 392–403 (PTRDCDDQRPVD). A compositionally biased stretch (low complexity) spans 404 to 421 (GDSPSPGSSSPLGAESSS). Ser-406, Ser-408, Ser-413, and Ser-573 each carry phosphoserine. One can recognise a PID domain in the interval 460–648 (LIDGIIFAAN…LLNTQDMYND (189 aa)). An autoinhibitory helix linker region spans residues 631-648 (LSQKEYSDLLNTQDMYND). 2 consecutive PDZ domains span residues 661 to 746 (DVFI…NIVR) and 752 to 828 (TVLI…MPAA).

As to quaternary structure, part of a multimeric complex containing STXBP1 and STX1A. Interacts with STXBP1. Component of the brain-specific heterotrimeric complex (LIN-10-LIN-2-LIN-7 complex) composed of at least APBA1, CASK, and LIN7, which associates with the motor protein KIF17 to transport vesicles along microtubules. Within the complex, interacts (via PDZ domain) with the motor protein KIF17; the interaction is direct and is required for association of KIF17 with the cargo that is to be transported. Binds to the cytoplasmic domain of amyloid protein (APP). Interacts (via PDZ 1 and 2 domains) with FSPB. Isoform 3 interacts (via its truncated PID domain) with active, GTP-bound RAB6A. Also interacts with GTP-bound RAB6B. In terms of tissue distribution, isoform 3 is expressed in brain.

Its subcellular location is the cytoplasm. It localises to the perinuclear region. The protein resides in the nucleus. It is found in the golgi apparatus. Its function is as follows. Putative function in synaptic vesicle exocytosis by binding to Munc18-1, an essential component of the synaptic vesicle exocytotic machinery. May modulate processing of the amyloid-beta precursor protein (APP) and hence formation of AAP-beta. Component of the LIN-10-LIN-2-LIN-7 complex, which associates with the motor protein KIF17 to transport vesicles containing N-methyl-D-aspartate (NMDA) receptor subunit NR2B along microtubules. The polypeptide is Amyloid-beta A4 precursor protein-binding family A member 1 (Mus musculus (Mouse)).